Consider the following 421-residue polypeptide: Putative zinc finger protein R05D3.3 (421 aa).

2 consecutive C2H2-type zinc fingers follow at residues 207–228 (VLCVICNEWICSRNRKNHIEAH) and 234–257 (YKCSACSYARRREIFVDQHIRTQH). The tract at residues 400–421 (GSSITDSNEPGPSEIKKELAEV) is disordered.

It is found in the nucleus. In Caenorhabditis elegans, this protein is Putative zinc finger protein R05D3.3.